We begin with the raw amino-acid sequence, 519 residues long: ATP synthase subunit beta (519 aa).

Positions 1–26 are enriched in low complexity; it reads MAKAATPKRAPARAAAIPAAATPAAK. The segment at 1-40 is disordered; it reads MAKAATPKRAPARAAAIPAAATPAAKPAKRASTRSAAARS. ATP is bound at residue 197-204; sequence GGAGVGKT.

It belongs to the ATPase alpha/beta chains family. In terms of assembly, F-type ATPases have 2 components, CF(1) - the catalytic core - and CF(0) - the membrane proton channel. CF(1) has five subunits: alpha(3), beta(3), gamma(1), delta(1), epsilon(1). CF(0) has three main subunits: a(1), b(2) and c(9-12). The alpha and beta chains form an alternating ring which encloses part of the gamma chain. CF(1) is attached to CF(0) by a central stalk formed by the gamma and epsilon chains, while a peripheral stalk is formed by the delta and b chains.

The protein localises to the cell inner membrane. It carries out the reaction ATP + H2O + 4 H(+)(in) = ADP + phosphate + 5 H(+)(out). Functionally, produces ATP from ADP in the presence of a proton gradient across the membrane. The catalytic sites are hosted primarily by the beta subunits. The sequence is that of ATP synthase subunit beta from Chelativorans sp. (strain BNC1).